We begin with the raw amino-acid sequence, 222 residues long: Phosphoribosylformylglycinamidine synthase subunit PurQ (222 aa).

The Glutamine amidotransferase type-1 domain maps to 3–222 (SAVIQLPGLN…LFESVLGRAA (220 aa)). Residue C86 is the Nucleophile of the active site. Catalysis depends on residues H196 and E198.

As to quaternary structure, part of the FGAM synthase complex composed of 1 PurL, 1 PurQ and 2 PurS subunits.

The protein localises to the cytoplasm. The catalysed reaction is N(2)-formyl-N(1)-(5-phospho-beta-D-ribosyl)glycinamide + L-glutamine + ATP + H2O = 2-formamido-N(1)-(5-O-phospho-beta-D-ribosyl)acetamidine + L-glutamate + ADP + phosphate + H(+). It carries out the reaction L-glutamine + H2O = L-glutamate + NH4(+). Its pathway is purine metabolism; IMP biosynthesis via de novo pathway; 5-amino-1-(5-phospho-D-ribosyl)imidazole from N(2)-formyl-N(1)-(5-phospho-D-ribosyl)glycinamide: step 1/2. Functionally, part of the phosphoribosylformylglycinamidine synthase complex involved in the purines biosynthetic pathway. Catalyzes the ATP-dependent conversion of formylglycinamide ribonucleotide (FGAR) and glutamine to yield formylglycinamidine ribonucleotide (FGAM) and glutamate. The FGAM synthase complex is composed of three subunits. PurQ produces an ammonia molecule by converting glutamine to glutamate. PurL transfers the ammonia molecule to FGAR to form FGAM in an ATP-dependent manner. PurS interacts with PurQ and PurL and is thought to assist in the transfer of the ammonia molecule from PurQ to PurL. This Chelativorans sp. (strain BNC1) protein is Phosphoribosylformylglycinamidine synthase subunit PurQ.